A 664-amino-acid chain; its full sequence is UvrABC system protein B (664 aa).

In terms of domain architecture, Helicase ATP-binding spans 25–412 (KGLVSGLTDQ…LQVVEQLVRP (388 aa)). 38-45 (GVTGSGKT) contributes to the ATP binding site. Residues 91-114 (YYDYYQPEAYVPQKDMYIEKDSDI) carry the Beta-hairpin motif. Residues 428–594 (QIDDLLEEVK…GIRKAIKDIN (167 aa)) enclose the Helicase C-terminal domain. Residues 620 to 655 (ARLIKELESQMKKAAKNLEFERAALIRDRVVELRAA) form the UVR domain.

The protein belongs to the UvrB family. In terms of assembly, forms a heterotetramer with UvrA during the search for lesions. Interacts with UvrC in an incision complex.

It localises to the cytoplasm. Its function is as follows. The UvrABC repair system catalyzes the recognition and processing of DNA lesions. A damage recognition complex composed of 2 UvrA and 2 UvrB subunits scans DNA for abnormalities. Upon binding of the UvrA(2)B(2) complex to a putative damaged site, the DNA wraps around one UvrB monomer. DNA wrap is dependent on ATP binding by UvrB and probably causes local melting of the DNA helix, facilitating insertion of UvrB beta-hairpin between the DNA strands. Then UvrB probes one DNA strand for the presence of a lesion. If a lesion is found the UvrA subunits dissociate and the UvrB-DNA preincision complex is formed. This complex is subsequently bound by UvrC and the second UvrB is released. If no lesion is found, the DNA wraps around the other UvrB subunit that will check the other stand for damage. This is UvrABC system protein B from Dehalococcoides mccartyi (strain CBDB1).